Consider the following 271-residue polypeptide: Sorting nexin-11 (271 aa).

The 117-residue stretch at 16–132 folds into the PX domain; that stretch reads VITVRVQDPR…HLFLQSQLSV (117 aa). R59, K85, and R99 together coordinate a 1,2-diacyl-sn-glycero-3-phospho-(1D-myo-inositol-3-phosphate). The segment at 135–139 is important for membrane trafficking; that stretch reads IEACV. The interval 185-271 is disordered; sequence PRSGRRSSPS…PTQLDTAWDK (87 aa). Residues 213 to 230 show a composition bias toward low complexity; that stretch reads SEGPSSESPTLLPSSSLP.

The protein belongs to the sorting nexin family. Monomer. Interacts with TRPV3; this interaction promotes TRPV3 trafficking from the cell membrane to lysosome for degradation.

It is found in the cell membrane. The protein localises to the endosome. The protein resides in the cytoplasm. Functionally, phosphoinositide-binding protein involved in protein sorting and membrane trafficking in endosomes. Regulates the levels of TRPV3 by promoting its trafficking from the cell membrane to lysosome for degradation. The sequence is that of Sorting nexin-11 (Snx11) from Mus musculus (Mouse).